The primary structure comprises 83 residues: RNA-binding protein Hfq (83 aa).

Residues 9–69 (DYFLNQLRKD…ISTFAPARNV (61 aa)) form the Sm domain.

It belongs to the Hfq family. Homohexamer.

Its function is as follows. RNA chaperone that binds small regulatory RNA (sRNAs) and mRNAs to facilitate mRNA translational regulation in response to envelope stress, environmental stress and changes in metabolite concentrations. Also binds with high specificity to tRNAs. The chain is RNA-binding protein Hfq from Exiguobacterium sibiricum (strain DSM 17290 / CCUG 55495 / CIP 109462 / JCM 13490 / 255-15).